The sequence spans 505 residues: Holliday junction branch migration ATPase PINA (505 aa).

The PINc domain maps to 2–106; the sequence is NDLMLDKSAL…IVTADETQKK (105 aa). Residues 434–505 are KH domain; sequence PVNRGITMSN…NIKIKIKLSD (72 aa). The tract at residues 493–505 is required for maximum interaction with Hjc and Hjm; it reads KKNNIKIKIKLSD.

In terms of assembly, homohexamer; the central pore (25-31 Angstroms) is large enough to hold dsDNA. In PDB:5F4H two of the 6 subunits are in an ATP-binding competent conformation. Interacts with Holliday junction resolvase Hjc; in the presence of HJ DNA this interaction decreases branch migration but not Y-DNA unwinding. Interacts with helicase Hjm (hel308) which decreases the DNA helicase activity of Hjm. Ca(2+) serves as cofactor.

The enzyme catalyses ATP + H2O = ADP + phosphate + H(+). Functionally, promotes Holliday junction (HJ) branch migration and unwinds Y-shaped DNA (but not replication forks or dsDNA) in an ATP hydrolysis-dependent manner. Stimulates cleavage by HJ resolvase Hjc. Unwinds Y-shaped and 3'-flap DNA substrates. In the absence of other proteins stabilizes replication forks (prevents spontaneous unwinding); Hjc, Hjm (Hel308) and PINA coordinate HJ migration and cleavage of replication forks in a coordinated way. Inhibits the 5'-3' (but not 3'-5') helicase activity of helicase Hjm (Hel308) on overhang DNA. Probably acts as an ATP-dependent pump that pulls DNA through the hexamer. This Saccharolobus islandicus (strain REY15A) (Sulfolobus islandicus) protein is Holliday junction branch migration ATPase PINA.